A 77-amino-acid chain; its full sequence is Translation initiation factor IF-1, chloroplastic (77 aa).

Positions 1-72 constitute an S1-like domain; that stretch reads MRKQNLIEME…TKGRITYRLR (72 aa).

The protein belongs to the IF-1 family. Component of the 30S ribosomal translation pre-initiation complex which assembles on the 30S ribosome in the order IF-2 and IF-3, IF-1 and N-formylmethionyl-tRNA(fMet); mRNA recruitment can occur at any time during PIC assembly.

It localises to the plastid. The protein localises to the chloroplast. Its function is as follows. One of the essential components for the initiation of protein synthesis. Stabilizes the binding of IF-2 and IF-3 on the 30S subunit to which N-formylmethionyl-tRNA(fMet) subsequently binds. Helps modulate mRNA selection, yielding the 30S pre-initiation complex (PIC). Upon addition of the 50S ribosomal subunit IF-1, IF-2 and IF-3 are released leaving the mature 70S translation initiation complex. The polypeptide is Translation initiation factor IF-1, chloroplastic (Staurastrum punctulatum (Green alga)).